Consider the following 146-residue polypeptide: D-aminoacyl-tRNA deacylase (146 aa).

The short motif at 138-139 is the Gly-cisPro motif, important for rejection of L-amino acids element; it reads GP.

It belongs to the DTD family. Homodimer.

It localises to the cytoplasm. The enzyme catalyses glycyl-tRNA(Ala) + H2O = tRNA(Ala) + glycine + H(+). It catalyses the reaction a D-aminoacyl-tRNA + H2O = a tRNA + a D-alpha-amino acid + H(+). Functionally, an aminoacyl-tRNA editing enzyme that deacylates mischarged D-aminoacyl-tRNAs. Also deacylates mischarged glycyl-tRNA(Ala), protecting cells against glycine mischarging by AlaRS. Acts via tRNA-based rather than protein-based catalysis; rejects L-amino acids rather than detecting D-amino acids in the active site. By recycling D-aminoacyl-tRNA to D-amino acids and free tRNA molecules, this enzyme counteracts the toxicity associated with the formation of D-aminoacyl-tRNA entities in vivo and helps enforce protein L-homochirality. The sequence is that of D-aminoacyl-tRNA deacylase from Xanthomonas axonopodis pv. citri (strain 306).